Consider the following 359-residue polypeptide: Peptide chain release factor 1 (359 aa).

Position 236 is an N5-methylglutamine (Gln236).

It belongs to the prokaryotic/mitochondrial release factor family. Methylated by PrmC. Methylation increases the termination efficiency of RF1.

Its subcellular location is the cytoplasm. Peptide chain release factor 1 directs the termination of translation in response to the peptide chain termination codons UAG and UAA. The protein is Peptide chain release factor 1 of Streptococcus pneumoniae (strain Taiwan19F-14).